Here is a 1060-residue protein sequence, read N- to C-terminus: MSEVNIDAGLFYKRLSIFQKQLTANNIPQALIIVGARSDDNTYKKSTVLQNWLLGYEFIHTAIYITDKKCIFITSEGKSKHLKHLTNQKPDLVELWIRTKDVEHNKQLFIKLLETMTKLDSKYGKILKDKYDGKFIDEWNQILNDDNNNNNNNTTNDHALSAVDLAVTVSQALAVKDSEEFNNTKIASNASVVMMDTFVNDMMIIVDDEKKITNSQLTDQIEDKIENNKWYLKTKLGKNLLQSIKDFDPEYLEYCYSPIIQSGGDYDLKPSAVSTDKPLIGEGVILSSIGLRYKSYCSNIARTFLIDPTSEMETNYDFLLQLQKYIVDNLLKDGVPANKVYQDTIDYIKKERPDLVNHFTKNCGWLLGMEFRDSTFILNAKTTDRKLTTGQIISLTIGFNNLSNDKNDKNDKNDNKTNHQKNKQTYALLLTDTIKITDDSSILLTNYSKDRAAISFSFNDDNETQKENNNNNNKRPGLSQTSNTTALKLESTENTAILKSKLRHENTNADDANSEKLRQEIQIKLHEKRLQEGLARFSKADATDADDFKPIFKKYESYVRESQIPNSVNDLKIHIDYKNQTIILPISGRPVPFHINSYKSGSQNEEGDFTYLRLNFNSPGAGGNVTKKQELPYEDSPDNSFLRSITIRSRDRQRMVDVYKAIQDLKKDSVKREQEKKQMADVITQANLIELKGSRVKKLNNVFIRPTPDTKKIGGVLQIHENGLRYQSQPQSQSNFKNDQRVDVLFSNIKHLFFQPCKDELIVLIHCHLKNPIMIGKRKTFDVQFYREASDMAFDETGGRKRKYRYGDEDELQQEQEERRRKALLDKEFKGFAELIADSSHGMVDLDIPFRELGFQGVPFRSSVLCVPTRDCLVQLIDPPYLVVTLEEIEIAHLERVQFGLKNFDLVFVFKDFNKPVVHINTIPVELLEDVKSWLTDVDIPISEGQMNLNWVQIMKTVLADPYQFFIDGGWAFLTGQGESDEEEESDEESDFRVSDEDPQDEDEESDDYASEEESDDYSGSDDDGSGGGGDDDDDDSESGEDWDALERKAAKADRNSGFD.

Residues 458–490 form a disordered region; that stretch reads FNDDNETQKENNNNNNKRPGLSQTSNTTALKLE. Positions 478-490 are enriched in polar residues; sequence LSQTSNTTALKLE. The stretch at 508–532 forms a coiled coil; sequence NADDANSEKLRQEIQIKLHEKRLQE. The disordered stretch occupies residues 977-1060; that stretch reads QGESDEEEES…AKADRNSGFD (84 aa). 2 stretches are compositionally biased toward acidic residues: residues 979–990 and 997–1044; these read ESDEEEESDEES and EDPQ…EDWD. Positions 1045 to 1060 are enriched in basic and acidic residues; the sequence is ALERKAAKADRNSGFD.

Belongs to the peptidase M24 family. SPT16 subfamily. Forms a stable heterodimer with POB3. The SPT16-POB3 dimer weakly associates with multiple molecules of NHP6 to form the FACT complex.

It is found in the nucleus. It localises to the chromosome. Its function is as follows. Component of the FACT complex, a general chromatin factor that acts to reorganize nucleosomes. The FACT complex is involved in multiple processes that require DNA as a template such as mRNA elongation, DNA replication and DNA repair. During transcription elongation the FACT complex acts as a histone chaperone that both destabilizes and restores nucleosomal structure. It facilitates the passage of RNA polymerase II and transcription by promoting the dissociation of one histone H2A-H2B dimer from the nucleosome, then subsequently promotes the reestablishment of the nucleosome following the passage of RNA polymerase II. This Candida albicans (strain SC5314 / ATCC MYA-2876) (Yeast) protein is FACT complex subunit SPT16 (CDC68).